Reading from the N-terminus, the 231-residue chain is Small ribosomal subunit protein uS5 (231 aa).

Residues 61–124 (KFRSKKPYRM…NRAKLNIIKV (64 aa)) enclose the S5 DRBM domain.

Belongs to the universal ribosomal protein uS5 family. As to quaternary structure, part of the 30S ribosomal subunit. Contacts protein S4.

In terms of biological role, with S4 and S12 plays an important role in translational accuracy. The protein is Small ribosomal subunit protein uS5 of Nanoarchaeum equitans (strain Kin4-M).